We begin with the raw amino-acid sequence, 395 residues long: Cytoplasmic 60S subunit biogenesis factor REI1 homolog 2 (395 aa).

4 C2H2-type zinc fingers span residues 4–28 (LACN…SEWH), 68–92 (YSCG…SKSH), 171–194 (ACCL…HKFH), and 222–249 (FVCL…AKGH).

It belongs to the REI1 family. Can form homodimer. Interacts with RLP24, RLP24A, RPL24B, EBP1 and JJJ1.

It localises to the cytoplasm. Pre-60S-associated factor involved in the cytoplasmic maturation of the 60S subunit. Involved in the dissociation and recycling of other late pre-60S factors before newly synthesized large ribosomal subunits enter translation. Can complement the growth defect of a yeast mutant lacking REI1. Required for leaf growth under cold temperature conditions. This Arabidopsis thaliana (Mouse-ear cress) protein is Cytoplasmic 60S subunit biogenesis factor REI1 homolog 2.